Here is a 299-residue protein sequence, read N- to C-terminus: HTH-type transcriptional regulator CrgA (299 aa).

The region spanning Met1–Thr60 is the HTH lysR-type domain. A DNA-binding region (H-T-H motif) is located at residues Phe20–Lys39.

The protein belongs to the LysR transcriptional regulatory family. In terms of assembly, forms oligomers. Forms an octomeric ring-like structure in solution. May form hexadecamers when bound to target DNA.

With respect to regulation, activation and repression activities are enhanced by the addition of alpha-methylene-gamma-butyrolactone (MBL), an inducer of NADPH:quinone oxidoreductase. Its function is as follows. Regulatory protein that activates transcription of mdaB, encoding a NADPH:quinone oxidoreductase, and represses its own transcription. Under the same experimental conditions, no regulation of transcription of pilus and capsule genes is detected. This chain is HTH-type transcriptional regulator CrgA, found in Neisseria meningitidis serogroup B (strain ATCC BAA-335 / MC58).